The primary structure comprises 203 residues: Nucleoside triphosphate pyrophosphatase (203 aa).

The Proton acceptor role is filled by D80.

This sequence belongs to the Maf family. A divalent metal cation is required as a cofactor.

It is found in the cytoplasm. The enzyme catalyses a ribonucleoside 5'-triphosphate + H2O = a ribonucleoside 5'-phosphate + diphosphate + H(+). It catalyses the reaction a 2'-deoxyribonucleoside 5'-triphosphate + H2O = a 2'-deoxyribonucleoside 5'-phosphate + diphosphate + H(+). In terms of biological role, nucleoside triphosphate pyrophosphatase. May have a dual role in cell division arrest and in preventing the incorporation of modified nucleotides into cellular nucleic acids. The polypeptide is Nucleoside triphosphate pyrophosphatase (Gluconobacter oxydans (strain 621H) (Gluconobacter suboxydans)).